The primary structure comprises 543 residues: Probable protein kinase UbiB (543 aa).

The region spanning D123–L501 is the Protein kinase domain. ATP-binding positions include L129–V137 and K152. The active-site Proton acceptor is D287. 2 helical membrane passes run S498 to G518 and D519 to W539.

This sequence belongs to the ABC1 family. UbiB subfamily.

The protein localises to the cell inner membrane. It participates in cofactor biosynthesis; ubiquinone biosynthesis [regulation]. Its function is as follows. Is probably a protein kinase regulator of UbiI activity which is involved in aerobic coenzyme Q (ubiquinone) biosynthesis. This is Probable protein kinase UbiB from Serratia proteamaculans (strain 568).